Reading from the N-terminus, the 315-residue chain is Ectopic P granules protein 4 (315 aa).

Transmembrane regions (helical) follow at residues 84-104 (IGFL…FSFF), 113-133 (IGYI…ALWF), 146-166 (LPPP…ISAL), 190-210 (IVYL…FFDG), 221-241 (IFES…LACS), and 242-262 (ISSN…FFII).

The protein belongs to the EI24 family. Expressed in pharyngeal and body wall muscles and intestine cells.

The protein localises to the cytoplasm. It is found in the membrane. Involved in autophagy. Thought to act in autophagasome and omegasome formation. The sequence is that of Ectopic P granules protein 4 from Caenorhabditis elegans.